Here is a 162-residue protein sequence, read N- to C-terminus: Transcription elongation factor GreA (162 aa).

Residues 1–28 (MQKEPMLEETYRKLSEELEQLKSVERGV) are a coiled coil.

This sequence belongs to the GreA/GreB family.

Necessary for efficient RNA polymerase transcription elongation past template-encoded arresting sites. The arresting sites in DNA have the property of trapping a certain fraction of elongating RNA polymerases that pass through, resulting in locked ternary complexes. Cleavage of the nascent transcript by cleavage factors such as GreA or GreB allows the resumption of elongation from the new 3'terminus. GreA releases sequences of 2 to 3 nucleotides. The chain is Transcription elongation factor GreA from Sulfurovum sp. (strain NBC37-1).